Here is a 92-residue protein sequence, read N- to C-terminus: Small ribosomal subunit protein uS19 (92 aa).

Belongs to the universal ribosomal protein uS19 family.

Its function is as follows. Protein S19 forms a complex with S13 that binds strongly to the 16S ribosomal RNA. This chain is Small ribosomal subunit protein uS19, found in Acholeplasma laidlawii (strain PG-8A).